The sequence spans 260 residues: NAD kinase (260 aa).

The active-site Proton acceptor is Asp54. NAD(+) contacts are provided by residues 54-55, 123-124, Arg150, Asp152, and 163-168; these read DG, ND, and TAYSLS.

Belongs to the NAD kinase family. The cofactor is a divalent metal cation.

It is found in the cytoplasm. The enzyme catalyses NAD(+) + ATP = ADP + NADP(+) + H(+). In terms of biological role, involved in the regulation of the intracellular balance of NAD and NADP, and is a key enzyme in the biosynthesis of NADP. Catalyzes specifically the phosphorylation on 2'-hydroxyl of the adenosine moiety of NAD to yield NADP. This Caldicellulosiruptor saccharolyticus (strain ATCC 43494 / DSM 8903 / Tp8T 6331) protein is NAD kinase.